A 151-amino-acid polypeptide reads, in one-letter code: Aspartate carbamoyltransferase regulatory chain (151 aa).

Zn(2+) contacts are provided by C108, C113, C138, and C141.

The protein belongs to the PyrI family. In terms of assembly, contains catalytic and regulatory chains. It depends on Zn(2+) as a cofactor.

Functionally, involved in allosteric regulation of aspartate carbamoyltransferase. The sequence is that of Aspartate carbamoyltransferase regulatory chain from Pyrobaculum arsenaticum (strain DSM 13514 / JCM 11321 / PZ6).